The following is a 267-amino-acid chain: 3-methyl-2-oxobutanoate hydroxymethyltransferase (267 aa).

Aspartate 45 and aspartate 84 together coordinate Mg(2+). 3-methyl-2-oxobutanoate is bound by residues 45–46, aspartate 84, and lysine 113; that span reads DS. Glutamate 115 is a Mg(2+) binding site. The Proton acceptor role is filled by glutamate 182.

Belongs to the PanB family. As to quaternary structure, homodecamer; pentamer of dimers. Requires Mg(2+) as cofactor.

It localises to the cytoplasm. It carries out the reaction 3-methyl-2-oxobutanoate + (6R)-5,10-methylene-5,6,7,8-tetrahydrofolate + H2O = 2-dehydropantoate + (6S)-5,6,7,8-tetrahydrofolate. It functions in the pathway cofactor biosynthesis; coenzyme A biosynthesis. Its function is as follows. Catalyzes the reversible reaction in which hydroxymethyl group from 5,10-methylenetetrahydrofolate is transferred onto alpha-ketoisovalerate to form ketopantoate. The sequence is that of 3-methyl-2-oxobutanoate hydroxymethyltransferase from Sulfurisphaera tokodaii (strain DSM 16993 / JCM 10545 / NBRC 100140 / 7) (Sulfolobus tokodaii).